Reading from the N-terminus, the 677-residue chain is L-type lectin-domain containing receptor kinase IV.2 (677 aa).

The signal sequence occupies residues methionine 1–serine 22. At glutamine 23–lysine 291 the chain is on the extracellular side. Residues asparagine 24 to arginine 262 are legume-lectin like. Asparagine 26, asparagine 57, asparagine 81, asparagine 128, asparagine 134, asparagine 171, asparagine 186, and asparagine 203 each carry an N-linked (GlcNAc...) asparagine glycan. A helical membrane pass occupies residues isoleucine 292–isoleucine 312. Topologically, residues valine 313–arginine 677 are cytoplasmic. One can recognise a Protein kinase domain in the interval phenylalanine 347 to leucine 625. ATP is bound by residues leucine 353–valine 361 and lysine 376. The active-site Proton acceptor is the aspartate 472.

This sequence in the C-terminal section; belongs to the protein kinase superfamily. Ser/Thr protein kinase family. The protein in the N-terminal section; belongs to the leguminous lectin family.

The protein localises to the cell membrane. The catalysed reaction is L-seryl-[protein] + ATP = O-phospho-L-seryl-[protein] + ADP + H(+). The enzyme catalyses L-threonyl-[protein] + ATP = O-phospho-L-threonyl-[protein] + ADP + H(+). In terms of biological role, required during pollen development. Its function is as follows. Involved in resistance response to the pathogenic bacteria Pseudomonas syringae. This Arabidopsis thaliana (Mouse-ear cress) protein is L-type lectin-domain containing receptor kinase IV.2.